A 3414-amino-acid chain; its full sequence is MAGKAILKGKGGGPPRRVSKETAKKTRQRVVQMPNGLVLKRIMEILWHAMVGTARSPLLKSFWKVVPLKQAMAALRKIKKAVSTLMIGLQKRGKRRSTTDWTGWLLVAMLLSIALAATVRKEGDGTTVIRAEGKDAATQVRVENGTCVILATDMGAWCEDSLSYECVTIDQGEEPVDVDCFCRNVDRVYLEYGRCGKQEGTRSRRSVLIPSHAQKDLTGRGQRWLEGDTIRSHLTRVEGWVWKNKSLTLAVVVIVWMTVESAVTRIVIVSALLCLAPAYASRCTHLENRDFVTGTQGTTRVTLVLELGGCVTITAEGKPSMDVWLDSIYQENPAKTREYCLHAKLSNTKVAARCPAMGPATLDEEHQSGTVCKRDQSDRGWGNHCGLFGKGSIVTCVKASCEAKKKATGHVYDANKIVYTVKVEPHTGNYVAANETHSGRKTALFTVSSEKTILTMGEYGDVSLMCRVASGVDLAQTVVLELDKTAEHLPTAWQVHRDWFNDLALPWKHEGMVGWNNAERLVEFGVPHAVKMDVYNLGDQTGVLLKSLAGAPLAHIEGTKYHLKSGHVTCEVGLEKLKMKGLTYTMCDKAKFTWKRAPTDSGHDTVVMEVAFSGTKPCRIPVRAVAHGSPDVDVAMLITPNPTIENNGGGFIEMQLPPGDNIIYVGELKHQWFQKGSSIGRVFQKTRKGIERLTVLGEHAWDFGSTGGFLSSIGKALHTVLGGAFNSVFGGVGFLPRILLGISLAWLGLNMRNPTMSMSFLLAGGLVLTMTLGVGADVGCAVDTERMELRCGEGLVVWREVSEWYDNYAFYPETPAALASALKEMVEEGDCGIVPQNRLEMAMWRSSVSELNLALAEGDANLTVVVDKHDPTDYRGGVPGLLKKGKDMKISWKSWGQSMIWSVPEAPRRFLVGTEGSSECPLAKRRTGVFTVAEFGMGLRTKVFLDFRQEITRECDTGVMGAAVKNGIAVHTDQSLWMKSIRNETGTYIVELLVTDLRNCSWPASHTIDNADVVDSELFLPASLAGPRSWYNRIPGYSEQVRGPWKYTPIKITREECPGTKVAIDASCDKRGASVRSTSESGKIIPEWCCRKCTLPPVTFRTGTDCWYAMEIRPVHDQGGLVRSMVVADNGELLSEGGIPGIVAVFVVLEYIIRKRPSAGLTVVWGGVVVLALLVTGMVTLQSMLRYVIAVGVTFHLELGPEIVALMLLQAVFELRVGLLGAFVLRRSLTTREVVTIYFLLLVLELGLPSANLEALWGWADALAMGAMIFRACTAEGKTGLGLLLVALMTQQNAVIVHQGLVIFLSVASACSVWKLLRGQREQKGLSWIVPLAGRLGGKGSGIRLLAFWELASRRDRRSFSEPLTVVGVMLTLASGMMRHTSQEALCALAAASFLLLMLVLGTRKMQLVAEWSGCVEWHPDLADEGGEISLRVRQDALGNFHLTELEKEERMMAFWLLAGLTASALHWTGILVVMGLWTMSEMLRSARRSDLVFSGQSGSERGSQPFEVRDGVYRILSPGLLWGHRQVGVGFGSKGVLHTMWHVTRGAAIFIDNAVAGPYWADVKEDVVCYGGAWSLEEKWKGEKVQVHAFPPGRAHEVHQCQPGELVLDTGRRIGAIPIDLAKGTSGSPILNAQGAVVGLYGNGLRTNETYVSSIAQGEVEKSRPNLPQAVVGTGWTSKGTITVLDMHPGSGKTHRVLPELIRQCIDKRLRTLVLAPTRVVLKEMERALSGKRVRFHSPAVGDQQTGNAIVDVMCHATYVNRRLLPQGRQNWEVAIMDEAHWTDPHSIAARGHLYSMAKENKCALVLMTATPPGKSEPFPESNGAITSEERQIPEGEWRDGFDWITEYEGRTAWFVPSIAKGGVIARTLRQKGKSVICLNSKTFEKDYSRVRDEKPDFVVTTDISEMGANLDVSRVIDGRTNIKPEEVDGKVELTGTRRVTTASAAQRRGRVGRHDGRTDEYIYSGQCDDDDSGLVQWKEAQILLDNITTLRGPVATFYGPEQDKMPEVAGHFRLTEERRKHFRHLLTHCDFTPWLAWHVAANVSNVTSRSWTWEGPEENAVDEANGDLVTFKSPNGAERTLRPVWRDARMFKEGRDIREFVAYASGRRSLGDMLTGMSGVPELLRHRCMSAMDVFYTLLYEEPGSRAMKMAERDAPEAFLTMVEMVVLGLATLGAVWCLVLRTSISRMMLGTMVLLVSLALLWAGGVGYGSMAGVALVFYTLLTVLQPEAGKQRSSDDNKLAYFLLTLCSLAGLVAANEMGFLEKTKADLSAVLWSEREEPRVWSEWTNIDIQPAKSWGTYVLVVSLFTPYIIHQLQTRIQQLVNSAVASGAQAMRDLGGGTPFFGVAGHVLTLGVVSLVGATPTSLVVGVGLAAFHLAIVVSGLEAELTQRAHKVFFSAMVRNPMVDGDVINPFGDGEVKPALYERKMSLILAMILCFMSVVLNRTVPAVTEASAVGLAAAGQLIRPEADTLWTMPVACGLSGVVRGSLWGFLPLGHRLWLRTSGTRRGGSEGDTLGDLWKRRLNNCTKEEFFAYRRTGILETERDKARELLKKGETNMGLAVSRGTAKLAWLEERGYVNLKGEVVDLGCGRGGWSYYAASRPAVMGVKAYTIGGKGHEVPRMVTSLGWNLIKFRAGMNVFTMQPHRADTVMCDIGESSPDAAIEGERTRKVILLMEQWKNRNPTAACVFKVLAPYRPEVIEALHRFQLQWGGGLVRTPFSRNSTHEMYYSTAISGNIVNSVNVQSRKLLARFGDQRGPIRVPEMDLGVGTRCVVLAEDKVKEHDVQERIKALQEQYSDTWHVDREHPYRTWQYWGSYRTAPTGSAASLINGVVKLLSWPWNAREDVVRMAMTDTTAFGQQRVFKDKVDTKAQEPQPGTRVIMRAVNDWMFERLARRSRPRMCSREEFIAKVKANAALGAWSDEQNKWASAKEAVEDPAFWHLVDEERERHLKGRCAHCVYNMMGKREKKLGEFGVAKGSRAIWYMWLGSRFLEFEALGFLNEDHWASRESSGAGVEGISLNYLGWHLKKLSLLEGGLFYADDTAGWDTRVTNADLEDEEQILRYMEGEHKQLAATVMQKAYHAKVVKVARPSRDGGCIMDVITRRDQRGSGQVVTYALNTLTNIKVQLIRMMEGEGVIEATDSHNPRLLRVERWLRDHGEERLGRMLISGDDCVVRPIDDRFSKALYFLNDMAKTRKDIGEWEHSAGFSSWEEVPFCSHHFHELVMKDGRTLVVPCRDQDELVGRARVSPGCGWSVRETACLSKAYGQMWLLSYFHRRDLRTLGFAICSAVPKDWVPTGRTTWSVHASGAWMTTENMLDVWNRVWILDNPFMENKEKVGEWRDIPYLPKSQDMMCSSLVGRRERAEWAKNIWGAVEKVRKMLGPERYSDYLSCMDRHELHWELKVESSII.

Residues 1-27 (MAGKAILKGKGGGPPRRVSKETAKKTR) are disordered. The Cytoplasmic segment spans residues 1 to 98 (MAGKAILKGK…LQKRGKRRST (98 aa)). The propeptide at 98-116 (TTDWTGWLLVAMLLSIALA) is ER anchor for the capsid protein C, removed in mature form by serine protease NS3. A helical transmembrane segment spans residues 99-119 (TDWTGWLLVAMLLSIALAATV). The Extracellular segment spans residues 120 to 242 (RKEGDGTTVI…HLTRVEGWVW (123 aa)). Asparagine 144 carries an N-linked (GlcNAc...) asparagine; by host glycan. A helical transmembrane segment spans residues 243-260 (KNKSLTLAVVVIVWMTVE). Serine 261 is a topological domain (cytoplasmic). The helical transmembrane segment at 262 to 280 (AVTRIVIVSALLCLAPAYA) threads the bilayer. At 281–727 (SRCTHLENRD…HTVLGGAFNS (447 aa)) the chain is on the extracellular side. 6 cysteine pairs are disulfide-bonded: cysteine 283–cysteine 310, cysteine 340–cysteine 396, cysteine 340–cysteine 401, cysteine 354–cysteine 385, cysteine 372–cysteine 396, and cysteine 372–cysteine 401. The interval 378–391 (DRGWGNHCGLFGKG) is fusion peptide. Residue asparagine 434 is glycosylated (N-linked (GlcNAc...) asparagine; by host). Disulfide bonds link cysteine 466–cysteine 570 and cysteine 587–cysteine 618. The helical transmembrane segment at 728–748 (VFGGVGFLPRILLGISLAWLG) threads the bilayer. Topologically, residues 749 to 755 (LNMRNPT) are cytoplasmic. A helical transmembrane segment spans residues 756–776 (MSMSFLLAGGLVLTMTLGVGA). The Extracellular portion of the chain corresponds to 777–1132 (DVGCAVDTER…RSMVVADNGE (356 aa)). 6 disulfides stabilise this stretch: cysteine 780-cysteine 791, cysteine 831-cysteine 920, cysteine 955-cysteine 1000, cysteine 1057-cysteine 1106, cysteine 1068-cysteine 1090, and cysteine 1089-cysteine 1093. Residues asparagine 861, asparagine 983, and asparagine 999 are each glycosylated (N-linked (GlcNAc...) asparagine; by host). Residues 1133–1153 (LLSEGGIPGIVAVFVVLEYII) traverse the membrane as a helical segment. The Cytoplasmic portion of the chain corresponds to 1154–1158 (RKRPS). The chain crosses the membrane as a helical span at residues 1159-1179 (AGLTVVWGGVVVLALLVTGMV). Over 1180–1187 (TLQSMLRY) the chain is Lumenal. A helical membrane pass occupies residues 1188–1208 (VIAVGVTFHLELGPEIVALML). Topologically, residues 1209 to 1236 (LQAVFELRVGLLGAFVLRRSLTTREVVT) are cytoplasmic. Residues 1237–1257 (IYFLLLVLELGLPSANLEALW) traverse the membrane as a helical segment. Residues 1258 to 1293 (GWADALAMGAMIFRACTAEGKTGLGLLLVALMTQQN) lie on the Lumenal side of the membrane. A helical transmembrane segment spans residues 1294 to 1314 (AVIVHQGLVIFLSVASACSVW). Residues 1315–1363 (KLLRGQREQKGLSWIVPLAGRLGGKGSGIRLLAFWELASRRDRRSFSEP) lie on the Cytoplasmic side of the membrane. A helical membrane pass occupies residues 1364 to 1381 (LTVVGVMLTLASGMMRHT). Residue serine 1382 is a topological domain, lumenal. Residues 1383–1403 (QEALCALAAASFLLLMLVLGT) traverse the membrane as a helical segment. Residues 1404-1454 (RKMQLVAEWSGCVEWHPDLADEGGEISLRVRQDALGNFHLTELEKEERMMA) lie on the Cytoplasmic side of the membrane. Positions 1410–1449 (AEWSGCVEWHPDLADEGGEISLRVRQDALGNFHLTELEKE) are interacts with and activates NS3 protease. The helical intramembrane region spans 1455 to 1475 (FWLLAGLTASALHWTGILVVM). The Cytoplasmic segment spans residues 1476–2160 (GLWTMSEMLR…KMAERDAPEA (685 aa)). Positions 1490-1669 (SDLVFSGQSG…EVEKSRPNLP (180 aa)) constitute a Peptidase S7 domain. Residues histidine 1543, aspartate 1567, and serine 1627 each act as charge relay system; for serine protease NS3 activity in the active site. The Helicase ATP-binding domain maps to 1675 to 1831 (TGWTSKGTIT…ESNGAITSEE (157 aa)). Residue 1688 to 1695 (MHPGSGKT) coordinates ATP. The DEAH box signature appears at 1779–1782 (DEAH). Residues 1841–2000 (DGFDWITEYE…TLRGPVATFY (160 aa)) form the Helicase C-terminal domain. Lysine 1883 is subject to N6-acetyllysine; by host. Residues 2161–2181 (FLTMVEMVVLGLATLGAVWCL) form a helical membrane-spanning segment. At 2182–2189 (VLRTSISR) the chain is on the lumenal side. An intramembrane region (helical) is located at residues 2190–2210 (MMLGTMVLLVSLALLWAGGVG). Position 2211 (tyrosine 2211) is a topological domain, lumenal. A helical transmembrane segment spans residues 2212–2232 (GSMAGVALVFYTLLTVLQPEA). At 2233–2244 (GKQRSSDDNKLA) the chain is on the cytoplasmic side. Residues 2245 to 2265 (YFLLTLCSLAGLVAANEMGFL) form a helical membrane-spanning segment. Topologically, residues 2266-2299 (EKTKADLSAVLWSEREEPRVWSEWTNIDIQPAKS) are lumenal. The helical intramembrane region spans 2300–2320 (WGTYVLVVSLFTPYIIHQLQT). Residues 2321–2343 (RIQQLVNSAVASGAQAMRDLGGG) lie on the Lumenal side of the membrane. Positions 2344–2364 (TPFFGVAGHVLTLGVVSLVGA) form an intramembrane region, helical. The Lumenal segment spans residues 2365 to 2368 (TPTS). A helical membrane pass occupies residues 2369–2389 (LVVGVGLAAFHLAIVVSGLEA). Over 2390 to 2432 (ELTQRAHKVFFSAMVRNPMVDGDVINPFGDGEVKPALYERKMS) the chain is Cytoplasmic. The helical transmembrane segment at 2433-2453 (LILAMILCFMSVVLNRTVPAV) threads the bilayer. Residues 2454-2477 (TEASAVGLAAAGQLIRPEADTLWT) lie on the Lumenal side of the membrane. The helical transmembrane segment at 2478-2498 (MPVACGLSGVVRGSLWGFLPL) threads the bilayer. The Cytoplasmic segment spans residues 2499–3414 (GHRLWLRTSG…WELKVESSII (916 aa)). In terms of domain architecture, mRNA cap 0-1 NS5-type MT spans 2512–2776 (GGSEGDTLGD…EMDLGVGTRC (265 aa)). Serine 2567 is an S-adenosyl-L-methionine binding site. A Phosphoserine modification is found at serine 2567. Lysine 2572 (for 2'-O-MTase activity) is an active-site residue. 5 residues coordinate S-adenosyl-L-methionine: glycine 2597, tryptophan 2598, threonine 2615, isoleucine 2616, and valine 2643. Catalysis depends on aspartate 2657, which acts as the For 2'-O-MTase activity. Isoleucine 2658 is an S-adenosyl-L-methionine binding site. Residues lysine 2694 and glutamate 2730 each act as for 2'-O-MTase activity in the active site. Residues 2730–2734 (EMYYS) are interaction with host SCRIB. Residue tyrosine 2732 participates in S-adenosyl-L-methionine binding. Positions 2950, 2954, 2959, and 2962 each coordinate Zn(2+). The region spanning 3040-3189 (GLFYADDTAG…RPIDDRFSKA (150 aa)) is the RdRp catalytic domain. 3 residues coordinate Zn(2+): histidine 3224, cysteine 3240, and cysteine 3359.

In the N-terminal section; belongs to the class I-like SAM-binding methyltransferase superfamily. mRNA cap 0-1 NS5-type methyltransferase family. Homodimer. In terms of assembly, forms heterodimers with envelope protein E in the endoplasmic reticulum and Golgi. As to quaternary structure, homodimer; in the endoplasmic reticulum and Golgi. Forms homodimers as well as homohexamers. NS1 may interact with NS4A. In terms of assembly, forms a heterodimer with serine protease NS3. May form homooligomers. As to quaternary structure, forms a heterodimer with NS2B. Interacts with NS4B. Interacts with unphosphorylated RNA-directed RNA polymerase NS5; this interaction stimulates RNA-directed RNA polymerase NS5 guanylyltransferase activity. Interacts with serine protease NS3. In terms of assembly, interacts with host STAT2; this interaction inhibits the phosphorylation of the latter, and, when all viral proteins are present (polyprotein), targets STAT2 for degradation. In terms of processing, specific enzymatic cleavages in vivo yield mature proteins. Cleavages in the lumen of endoplasmic reticulum are performed by host signal peptidase, whereas cleavages in the cytoplasmic side are performed by serine protease NS3. Signal cleavage at the 2K-4B site requires a prior NS3 protease-mediated cleavage at the 4A-2K site. Post-translationally, cleaved in post-Golgi vesicles by a host furin, releasing the mature small envelope protein M, and peptide pr. This cleavage is incomplete as up to 30% of viral particles still carry uncleaved prM. N-glycosylated. In terms of processing, N-glycosylated. The excreted form is glycosylated and this is required for efficient secretion of the protein from infected cells. Post-translationally, acetylated by host KAT5. Acetylation modulates NS3 RNA-binding and unwinding activities and plays an important positive role for viral replication. Phosphorylated on serines residues. This phosphorylation may trigger NS5 nuclear localization.

The protein localises to the virion. The protein resides in the host nucleus. Its subcellular location is the host cytoplasm. It is found in the host perinuclear region. It localises to the secreted. The protein localises to the virion membrane. The protein resides in the host endoplasmic reticulum membrane. The enzyme catalyses Selective hydrolysis of -Xaa-Xaa-|-Yaa- bonds in which each of the Xaa can be either Arg or Lys and Yaa can be either Ser or Ala.. It carries out the reaction RNA(n) + a ribonucleoside 5'-triphosphate = RNA(n+1) + diphosphate. It catalyses the reaction a ribonucleoside 5'-triphosphate + H2O = a ribonucleoside 5'-diphosphate + phosphate + H(+). The catalysed reaction is ATP + H2O = ADP + phosphate + H(+). The enzyme catalyses a 5'-end (5'-triphosphoguanosine)-ribonucleoside in mRNA + S-adenosyl-L-methionine = a 5'-end (N(7)-methyl 5'-triphosphoguanosine)-ribonucleoside in mRNA + S-adenosyl-L-homocysteine. It carries out the reaction a 5'-end (N(7)-methyl 5'-triphosphoguanosine)-ribonucleoside in mRNA + S-adenosyl-L-methionine = a 5'-end (N(7)-methyl 5'-triphosphoguanosine)-(2'-O-methyl-ribonucleoside) in mRNA + S-adenosyl-L-homocysteine + H(+). In terms of biological role, plays a role in virus budding by binding to the cell membrane and gathering the viral RNA into a nucleocapsid that forms the core of a mature virus particle. During virus entry, may induce genome penetration into the host cytoplasm after hemifusion induced by the surface proteins. Can migrate to the cell nucleus where it modulates host functions. Functionally, inhibits RNA silencing by interfering with host Dicer. Prevents premature fusion activity of envelope proteins in trans-Golgi by binding to envelope protein E at pH6.0. After virion release in extracellular space, gets dissociated from E dimers. Its function is as follows. Acts as a chaperone for envelope protein E during intracellular virion assembly by masking and inactivating envelope protein E fusion peptide. prM is the only viral peptide matured by host furin in the trans-Golgi network probably to avoid catastrophic activation of the viral fusion activity in acidic Golgi compartment prior to virion release. prM-E cleavage is inefficient, and many virions are only partially matured. These uncleaved prM would play a role in immune evasion. In terms of biological role, may play a role in virus budding. Exerts cytotoxic effects by activating a mitochondrial apoptotic pathway through M ectodomain. May display a viroporin activity. Functionally, binds to host cell surface receptor and mediates fusion between viral and cellular membranes. Envelope protein is synthesized in the endoplasmic reticulum in the form of heterodimer with protein prM. They play a role in virion budding in the ER, and the newly formed immature particle is covered with 60 spikes composed of heterodimer between precursor prM and envelope protein E. The virion is transported to the Golgi apparatus where the low pH causes dissociation of PrM-E heterodimers and formation of E homodimers. prM-E cleavage is inefficient, and many virions are only partially matured. These uncleaved prM would play a role in immune evasion. Involved in immune evasion, pathogenesis and viral replication. Once cleaved off the polyprotein, is targeted to three destinations: the viral replication cycle, the plasma membrane and the extracellular compartment. Essential for viral replication. Required for formation of the replication complex and recruitment of other non-structural proteins to the ER-derived membrane structures. Excreted as a hexameric lipoparticle that plays a role against host immune response. Antagonizing the complement function. Binds to the host macrophages and dendritic cells. Inhibits signal transduction originating from Toll-like receptor 3 (TLR3). Its function is as follows. Component of the viral RNA replication complex that functions in virion assembly and antagonizes the host immune response. In terms of biological role, required cofactor for the serine protease function of NS3. May have membrane-destabilizing activity and form viroporins. Functionally, displays three enzymatic activities: serine protease, NTPase and RNA helicase. NS3 serine protease, in association with NS2B, performs its autocleavage and cleaves the polyprotein at dibasic sites in the cytoplasm: C-prM, NS2A-NS2B, NS2B-NS3, NS3-NS4A, NS4A-2K and NS4B-NS5. NS3 RNA helicase binds RNA and unwinds dsRNA in the 3' to 5' direction. Regulates the ATPase activity of the NS3 helicase activity. NS4A allows NS3 helicase to conserve energy during unwinding. Its function is as follows. Functions as a signal peptide for NS4B and is required for the interferon antagonism activity of the latter. In terms of biological role, induces the formation of ER-derived membrane vesicles where the viral replication takes place. Inhibits interferon (IFN)-induced host STAT1 phosphorylation and nuclear translocation, thereby preventing the establishment of cellular antiviral state by blocking the IFN-alpha/beta pathway. Inhibits STAT2 translocation in the nucleus after IFN-alpha treatment. Functionally, replicates the viral (+) and (-) RNA genome, and performs the capping of genomes in the cytoplasm. NS5 methylates viral RNA cap at guanine N-7 and ribose 2'-O positions. Besides its role in RNA genome replication, also prevents the establishment of cellular antiviral state by blocking the interferon-alpha/beta (IFN-alpha/beta) signaling pathway. Inhibits host TYK2 and STAT2 phosphorylation, thereby preventing activation of JAK-STAT signaling pathway. The protein is Genome polyprotein of Homo sapiens (Human).